The primary structure comprises 410 residues: BTB and MATH domain-containing protein 42 (410 aa).

The span at 1-19 shows a compositional bias: polar residues; the sequence is MSSRSSWSSTEQINRTISS. The segment at 1 to 29 is disordered; sequence MSSRSSWSSTEQINRTISSRADDLPPQPR. In terms of domain architecture, MATH spans 45 to 173; sequence STKLEWKIEQ…DGTLFLICEV (129 aa). The BTB domain occupies 219 to 287; sequence TDCVIHVGNK…MYTGATESLE (69 aa). The tract at residues 389–410 is disordered; it reads TSNIPISVSPPPARKRLRRSAK. The span at 401 to 410 shows a compositional bias: basic residues; that stretch reads ARKRLRRSAK.

In terms of assembly, interacts with cul-3.

It participates in protein modification; protein ubiquitination. Probable substrate-specific adapter of an E3 ubiquitin-protein ligase complex which mediates the ubiquitination and subsequent proteasomal degradation of target proteins. This chain is BTB and MATH domain-containing protein 42 (bath-42), found in Caenorhabditis elegans.